The primary structure comprises 572 residues: Proline--tRNA ligase (572 aa).

Belongs to the class-II aminoacyl-tRNA synthetase family. ProS type 1 subfamily. In terms of assembly, homodimer.

The protein resides in the cytoplasm. It carries out the reaction tRNA(Pro) + L-proline + ATP = L-prolyl-tRNA(Pro) + AMP + diphosphate. Catalyzes the attachment of proline to tRNA(Pro) in a two-step reaction: proline is first activated by ATP to form Pro-AMP and then transferred to the acceptor end of tRNA(Pro). As ProRS can inadvertently accommodate and process non-cognate amino acids such as alanine and cysteine, to avoid such errors it has two additional distinct editing activities against alanine. One activity is designated as 'pretransfer' editing and involves the tRNA(Pro)-independent hydrolysis of activated Ala-AMP. The other activity is designated 'posttransfer' editing and involves deacylation of mischarged Ala-tRNA(Pro). The misacylated Cys-tRNA(Pro) is not edited by ProRS. This chain is Proline--tRNA ligase, found in Edwardsiella ictaluri (strain 93-146).